Reading from the N-terminus, the 356-residue chain is Peptide chain release factor 1 (356 aa).

Gln-233 is subject to N5-methylglutamine.

Belongs to the prokaryotic/mitochondrial release factor family. Methylated by PrmC. Methylation increases the termination efficiency of RF1.

It localises to the cytoplasm. In terms of biological role, peptide chain release factor 1 directs the termination of translation in response to the peptide chain termination codons UAG and UAA. This chain is Peptide chain release factor 1, found in Bacillus licheniformis (strain ATCC 14580 / DSM 13 / JCM 2505 / CCUG 7422 / NBRC 12200 / NCIMB 9375 / NCTC 10341 / NRRL NRS-1264 / Gibson 46).